The primary structure comprises 474 residues: Gamma-aminobutyric acid receptor subunit beta-1 (474 aa).

A signal peptide spans 1–25 (MWTVQNRESLGLLSFPVMIAMVCCA). The Extracellular segment spans residues 26 to 245 (HSANEPSNMS…SFRLKRNIGY (220 aa)). N-linked (GlcNAc...) asparagine glycans are attached at residues Asn33 and Asn105. Tyr122 serves as a coordination point for histamine. Residues Cys161 and Cys175 are joined by a disulfide bond. A glycan (N-linked (GlcNAc...) asparagine) is linked at Asn174. Histamine-binding positions include 181–182 (SY) and Thr227. Tyr182 and Thr227 together coordinate 4-aminobutanoate. The next 3 helical transmembrane spans lie at 246 to 267 (FILQTYMPSTLITILSWVSFWI), 271 to 293 (ASAARVALGITTVLTMTTISTHL), and 305 to 327 (AIDIYLMGCFVFVFLALLEYAFV). Over 328–451 (NYIFFGKGPQ…DLTDVNSIDK (124 aa)) the chain is Cytoplasmic. The helical transmembrane segment at 452 to 473 (WSRMFFPITFSLFNVVYWLYYV) threads the bilayer.

Belongs to the ligand-gated ion channel (TC 1.A.9) family. Gamma-aminobutyric acid receptor (TC 1.A.9.5) subfamily. GABRB1 sub-subfamily. In terms of assembly, heteropentamer, formed by a combination of alpha (GABRA1-6), beta (GABRB1-3), gamma (GABRG1-3), delta (GABRD), epsilon (GABRE), rho (GABRR1-3), pi (GABRP) and theta (GABRQ) chains, each subunit exhibiting distinct physiological and pharmacological properties. Binds UBQLN1.

The protein resides in the postsynaptic cell membrane. It localises to the cell membrane. It carries out the reaction chloride(in) = chloride(out). With respect to regulation, potentiated by histamine. Functionally, beta subunit of the heteropentameric ligand-gated chloride channel gated by gamma-aminobutyric acid (GABA), a major inhibitory neurotransmitter in the brain. GABA-gated chloride channels, also named GABA(A) receptors (GABAAR), consist of five subunits arranged around a central pore and contain GABA active binding site(s) located at the alpha and beta subunit interface(s). When activated by GABA, GABAARs selectively allow the flow of chloride anions across the cell membrane down their electrochemical gradient. Chloride influx into the postsynaptic neuron following GABAAR opening decreases the neuron ability to generate a new action potential, thereby reducing nerve transmission. Beta-containing GABAARs can simultaneously bind GABA and histamine where histamine binds at the interface of two neighboring beta subunits, which may be involved in the regulation of sleep and wakefulness. The chain is Gamma-aminobutyric acid receptor subunit beta-1 (GABRB1) from Bos taurus (Bovine).